The following is a 399-amino-acid chain: S-adenosylmethionine synthase (399 aa).

His-17 serves as a coordination point for ATP. Asp-19 contacts Mg(2+). Glu-52 provides a ligand contact to K(+). Glu-65 and Gln-109 together coordinate L-methionine. The interval 109–119 (QSADIAQGVDA) is flexible loop. Residues 177–179 (DSK), 243–244 (KF), Asp-252, 258–259 (RK), Ala-275, and Lys-279 each bind ATP. Asp-252 serves as a coordination point for L-methionine. Lys-283 is a binding site for L-methionine.

This sequence belongs to the AdoMet synthase family. In terms of assembly, homotetramer; dimer of dimers. The cofactor is Mg(2+). It depends on K(+) as a cofactor.

The protein resides in the cytoplasm. It catalyses the reaction L-methionine + ATP + H2O = S-adenosyl-L-methionine + phosphate + diphosphate. It participates in amino-acid biosynthesis; S-adenosyl-L-methionine biosynthesis; S-adenosyl-L-methionine from L-methionine: step 1/1. Functionally, catalyzes the formation of S-adenosylmethionine (AdoMet) from methionine and ATP. The overall synthetic reaction is composed of two sequential steps, AdoMet formation and the subsequent tripolyphosphate hydrolysis which occurs prior to release of AdoMet from the enzyme. The chain is S-adenosylmethionine synthase from Bradyrhizobium sp. (strain BTAi1 / ATCC BAA-1182).